We begin with the raw amino-acid sequence, 323 residues long: Methionyl-tRNA formyltransferase (323 aa).

118–121 (SLLP) lines the (6S)-5,6,7,8-tetrahydrofolate pocket.

This sequence belongs to the Fmt family.

It carries out the reaction L-methionyl-tRNA(fMet) + (6R)-10-formyltetrahydrofolate = N-formyl-L-methionyl-tRNA(fMet) + (6S)-5,6,7,8-tetrahydrofolate + H(+). Functionally, attaches a formyl group to the free amino group of methionyl-tRNA(fMet). The formyl group appears to play a dual role in the initiator identity of N-formylmethionyl-tRNA by promoting its recognition by IF2 and preventing the misappropriation of this tRNA by the elongation apparatus. The sequence is that of Methionyl-tRNA formyltransferase from Buchnera aphidicola subsp. Baizongia pistaciae (strain Bp).